The sequence spans 89 residues: Small ribosomal subunit protein uS15 (89 aa).

Belongs to the universal ribosomal protein uS15 family. In terms of assembly, part of the 30S ribosomal subunit. Forms a bridge to the 50S subunit in the 70S ribosome, contacting the 23S rRNA.

Its function is as follows. One of the primary rRNA binding proteins, it binds directly to 16S rRNA where it helps nucleate assembly of the platform of the 30S subunit by binding and bridging several RNA helices of the 16S rRNA. Functionally, forms an intersubunit bridge (bridge B4) with the 23S rRNA of the 50S subunit in the ribosome. The chain is Small ribosomal subunit protein uS15 from Treponema denticola (strain ATCC 35405 / DSM 14222 / CIP 103919 / JCM 8153 / KCTC 15104).